We begin with the raw amino-acid sequence, 238 residues long: Ribonuclease PH (238 aa).

Phosphate-binding positions include R86 and 124-126 (GTR).

Belongs to the RNase PH family. Homohexameric ring arranged as a trimer of dimers.

The catalysed reaction is tRNA(n+1) + phosphate = tRNA(n) + a ribonucleoside 5'-diphosphate. Its function is as follows. Phosphorolytic 3'-5' exoribonuclease that plays an important role in tRNA 3'-end maturation. Removes nucleotide residues following the 3'-CCA terminus of tRNAs; can also add nucleotides to the ends of RNA molecules by using nucleoside diphosphates as substrates, but this may not be physiologically important. Probably plays a role in initiation of 16S rRNA degradation (leading to ribosome degradation) during starvation. The sequence is that of Ribonuclease PH from Salmonella gallinarum (strain 287/91 / NCTC 13346).